Here is a 537-residue protein sequence, read N- to C-terminus: Protein ST7 homolog (537 aa).

A helical transmembrane segment spans residues 15 to 35 (FYVALTGTSSLISGLILIFEW). A disordered region spans residues 61–111 (SDGQSESSNGSGSSSSSGSSSSSNGGAGGGGSGGAGASGSGSATTSTGTQM). Residues 67-84 (SSNGSGSSSSSGSSSSSN) show a composition bias toward low complexity. Residues 85–99 (GGAGGGGSGGAGASG) show a composition bias toward gly residues. Residues 100 to 109 (SGSATTSTGT) are compositionally biased toward low complexity. The chain crosses the membrane as a helical span at residues 472–492 (LPFFILFTAGLCSITALLALA).

It belongs to the ST7 family.

Its subcellular location is the membrane. This Drosophila melanogaster (Fruit fly) protein is Protein ST7 homolog.